The sequence spans 318 residues: NADH-ubiquinone oxidoreductase chain 1 (318 aa).

Transmembrane regions (helical) follow at residues 3-23 (FINI…LTLV), 70-90 (LFII…IPLP), 100-120 (LGML…LWSG), 146-166 (MAII…QMLI), 171-191 (HIWL…STLA), 231-251 (IILM…HINY), 254-273 (LYST…FLWI), and 294-314 (LPLT…LAGI).

Belongs to the complex I subunit 1 family. Core subunit of respiratory chain NADH dehydrogenase (Complex I) which is composed of 45 different subunits.

The protein resides in the mitochondrion inner membrane. It carries out the reaction a ubiquinone + NADH + 5 H(+)(in) = a ubiquinol + NAD(+) + 4 H(+)(out). Functionally, core subunit of the mitochondrial membrane respiratory chain NADH dehydrogenase (Complex I) which catalyzes electron transfer from NADH through the respiratory chain, using ubiquinone as an electron acceptor. Essential for the catalytic activity and assembly of complex I. The chain is NADH-ubiquinone oxidoreductase chain 1 from Rattus norvegicus (Rat).